The primary structure comprises 195 residues: Cysteine/O-acetylserine efflux protein (195 aa).

The Periplasmic segment spans residues 1 to 7; that stretch reads MTPTLLS. The helical transmembrane segment at 8–28 threads the bilayer; it reads AFWTYTLITAMTPGPNNILAL. At 29-46 the chain is on the cytoplasmic side; it reads SSATSHGFRQSTRVLAGM. A helical transmembrane segment spans residues 47–67; sequence SLGFLIVMLLCAGISFSLAVI. At 68–69 the chain is on the periplasmic side; sequence DP. The chain crosses the membrane as a helical span at residues 70–90; that stretch reads AAVHLLSWAGAAYIVWLAWKI. Topologically, residues 91–104 are cytoplasmic; the sequence is ATSPTKEDGLQAKP. The chain crosses the membrane as a helical span at residues 105–125; sequence ISFWASFALQFVNVKIILYGV. Over 126-141 the chain is Periplasmic; that stretch reads TALSTFVLPQTQALSW. The helical transmembrane segment at 142–162 threads the bilayer; that stretch reads VVGVSVLLAMIGTFGNVCWAL. The Cytoplasmic portion of the chain corresponds to 163–176; the sequence is AGHLFQRLFRQYGR. The helical transmembrane segment at 177–194 threads the bilayer; sequence QLNIVLALLLIYCAVRIF. Position 195 (Tyr195) is a topological domain, periplasmic.

Belongs to the Rht family.

The protein localises to the cell inner membrane. The catalysed reaction is O-acetyl-L-serine(in) = O-acetyl-L-serine(out). The enzyme catalyses L-cysteine(in) = L-cysteine(out). Exporter of O-acetylserine (OAS) and cysteine. The polypeptide is Cysteine/O-acetylserine efflux protein (eamB) (Escherichia coli O139:H28 (strain E24377A / ETEC)).